The following is a 1320-amino-acid chain: Protein brunelleschi (1320 aa).

A disordered region spans residues 313–411 (HRNSSLQEAG…IPGHQRNGDL (99 aa)). The segment covering 314–327 (RNSSLQEAGTSPLK) has biased composition (polar residues). S317 is modified (phosphoserine). T329 is subject to Phosphothreonine. Residues 329–340 (TPEKWRASDATK) show a composition bias toward basic and acidic residues. Residues 345–361 (SDATANNVDSNQPQQRV) are compositionally biased toward polar residues. Residues 362-400 (TSNSSSCSSVSSLVTTATNSSASDTPTTSSSSTSTISAA) show a composition bias toward low complexity. S672 is modified (phosphoserine). Positions 923-954 (VSTSGHASLPSRVGSPHHRRNEPQNSSFRSTI) are disordered. Positions 945-954 (PQNSSFRSTI) are enriched in polar residues.

It belongs to the NIBP family. As to quaternary structure, may be part of the multisubunit TRAPP (transport protein particle) complex.

It is found in the cytoplasm. The protein localises to the golgi apparatus. Functionally, cooperates with Rab11 and fwd/PI4K to mediate the flow of membrane through the Golgi, which is required to support cleavage furrow ingression, therefore promoting cytokinesis in male meiotic cells. The protein is Protein brunelleschi of Drosophila melanogaster (Fruit fly).